Reading from the N-terminus, the 359-residue chain is MATH domain and coiled-coil domain-containing protein At2g42475 (359 aa).

The MATH domain maps to 6–128 (KTSFTFEIEN…NDKLIITVEV (123 aa)). Residues 146 to 337 (EFKELQDLYN…NLELMVLDFK (192 aa)) adopt a coiled-coil conformation.

The polypeptide is MATH domain and coiled-coil domain-containing protein At2g42475 (Arabidopsis thaliana (Mouse-ear cress)).